A 228-amino-acid polypeptide reads, in one-letter code: Small ribosomal subunit protein uS2 (228 aa).

This sequence belongs to the universal ribosomal protein uS2 family.

This chain is Small ribosomal subunit protein uS2, found in Blochmanniella pennsylvanica (strain BPEN).